A 323-amino-acid chain; its full sequence is tRNA U34 carboxymethyltransferase (323 aa).

Residues Lys-91, Trp-105, Lys-110, Gly-130, 152–154 (DPT), 181–182 (IE), Met-196, Tyr-200, and Arg-315 contribute to the carboxy-S-adenosyl-L-methionine site.

It belongs to the class I-like SAM-binding methyltransferase superfamily. CmoB family. In terms of assembly, homotetramer.

It carries out the reaction carboxy-S-adenosyl-L-methionine + 5-hydroxyuridine(34) in tRNA = 5-carboxymethoxyuridine(34) in tRNA + S-adenosyl-L-homocysteine + H(+). Catalyzes carboxymethyl transfer from carboxy-S-adenosyl-L-methionine (Cx-SAM) to 5-hydroxyuridine (ho5U) to form 5-carboxymethoxyuridine (cmo5U) at position 34 in tRNAs. The sequence is that of tRNA U34 carboxymethyltransferase from Shigella flexneri serotype 5b (strain 8401).